The sequence spans 355 residues: 3-dehydroquinate synthase (355 aa).

Residues 71–76, 105–109, 129–130, lysine 142, and lysine 151 each bind NAD(+); these read EGEASK, GVVGD, and TS. 3 residues coordinate Zn(2+): glutamate 184, histidine 246, and histidine 263.

The protein belongs to the sugar phosphate cyclases superfamily. Dehydroquinate synthase family. Co(2+) is required as a cofactor. Requires Zn(2+) as cofactor. NAD(+) serves as cofactor.

The protein resides in the cytoplasm. It carries out the reaction 7-phospho-2-dehydro-3-deoxy-D-arabino-heptonate = 3-dehydroquinate + phosphate. The protein operates within metabolic intermediate biosynthesis; chorismate biosynthesis; chorismate from D-erythrose 4-phosphate and phosphoenolpyruvate: step 2/7. Its function is as follows. Catalyzes the conversion of 3-deoxy-D-arabino-heptulosonate 7-phosphate (DAHP) to dehydroquinate (DHQ). The sequence is that of 3-dehydroquinate synthase from Streptococcus gordonii (strain Challis / ATCC 35105 / BCRC 15272 / CH1 / DL1 / V288).